A 361-amino-acid polypeptide reads, in one-letter code: Peptide chain release factor 1 (361 aa).

Gln-237 is modified (N5-methylglutamine).

The protein belongs to the prokaryotic/mitochondrial release factor family. In terms of processing, methylated by PrmC. Methylation increases the termination efficiency of RF1.

The protein localises to the cytoplasm. Peptide chain release factor 1 directs the termination of translation in response to the peptide chain termination codons UAG and UAA. The sequence is that of Peptide chain release factor 1 from Chromohalobacter salexigens (strain ATCC BAA-138 / DSM 3043 / CIP 106854 / NCIMB 13768 / 1H11).